The chain runs to 859 residues: Fanconi anemia group B protein (859 aa).

The residue at position 2 (T2) is an N-acetylthreonine.

Belongs to the multisubunit FA complex composed of FANCA, FANCB, FANCC, FANCE, FANCF, FANCG, FANCL/PHF9 and FANCM. The complex is not found in FA patients.

Its subcellular location is the nucleus. DNA repair protein required for FANCD2 ubiquitination. The chain is Fanconi anemia group B protein (FANCB) from Homo sapiens (Human).